The following is a 156-amino-acid chain: Small ribosomal subunit protein uS7 (156 aa).

This sequence belongs to the universal ribosomal protein uS7 family. As to quaternary structure, part of the 30S ribosomal subunit. Contacts proteins S9 and S11.

Functionally, one of the primary rRNA binding proteins, it binds directly to 16S rRNA where it nucleates assembly of the head domain of the 30S subunit. Is located at the subunit interface close to the decoding center, probably blocks exit of the E-site tRNA. The protein is Small ribosomal subunit protein uS7 of Vibrio vulnificus (strain CMCP6).